The sequence spans 133 residues: p53 and DNA damage-regulated protein 1 (133 aa).

It belongs to the prefoldin subunit beta family. As to quaternary structure, component of the PAQosome complex which is responsible for the biogenesis of several protein complexes and which consists of R2TP complex members RUVBL1, RUVBL2, RPAP3 and PIH1D1, URI complex members PFDN2, PFDN6, PDRG1, UXT and URI1 as well as ASDURF, POLR2E and DNAAF10/WDR92.

The protein localises to the cytoplasm. May play a role in chaperone-mediated protein folding. In Pongo abelii (Sumatran orangutan), this protein is p53 and DNA damage-regulated protein 1 (PDRG1).